Here is a 407-residue protein sequence, read N- to C-terminus: Na(+)-translocating NADH-quinone reductase subunit F (407 aa).

The chain crosses the membrane as a helical span at residues 6-26 (IFLAIGMFTAIVLGLVAIILV). The 2Fe-2S ferredoxin-type domain maps to 35–127 (GDVTIQINGE…DMQIRVPEEV (93 aa)). Residues Cys70, Cys76, Cys79, and Cys111 each coordinate [2Fe-2S] cluster. Positions 130–269 (VKKWECTVES…YGPFGEFFAK (140 aa)) constitute an FAD-binding FR-type domain.

This sequence belongs to the NqrF family. As to quaternary structure, composed of six subunits; NqrA, NqrB, NqrC, NqrD, NqrE and NqrF. [2Fe-2S] cluster serves as cofactor. Requires FAD as cofactor.

Its subcellular location is the cell inner membrane. It carries out the reaction a ubiquinone + n Na(+)(in) + NADH + H(+) = a ubiquinol + n Na(+)(out) + NAD(+). NQR complex catalyzes the reduction of ubiquinone-1 to ubiquinol by two successive reactions, coupled with the transport of Na(+) ions from the cytoplasm to the periplasm. The first step is catalyzed by NqrF, which accepts electrons from NADH and reduces ubiquinone-1 to ubisemiquinone by a one-electron transfer pathway. This Pseudomonas paraeruginosa (strain DSM 24068 / PA7) (Pseudomonas aeruginosa (strain PA7)) protein is Na(+)-translocating NADH-quinone reductase subunit F.